The primary structure comprises 499 residues: Lysine--tRNA ligase (499 aa).

Positions 410 and 417 each coordinate Mg(2+).

This sequence belongs to the class-II aminoacyl-tRNA synthetase family. Homodimer. Mg(2+) is required as a cofactor.

It is found in the cytoplasm. It catalyses the reaction tRNA(Lys) + L-lysine + ATP = L-lysyl-tRNA(Lys) + AMP + diphosphate. This chain is Lysine--tRNA ligase (lysS), found in Bacillus subtilis (strain 168).